The chain runs to 275 residues: Rhamnulose-1-phosphate aldolase (275 aa).

Residue Glu-117 is part of the active site. Residues His-141, His-143, and His-212 each coordinate Zn(2+).

The protein belongs to the aldolase class II family. RhaD subfamily. Homotetramer. Zn(2+) is required as a cofactor.

The protein resides in the cytoplasm. It catalyses the reaction L-rhamnulose 1-phosphate = (S)-lactaldehyde + dihydroxyacetone phosphate. Its pathway is carbohydrate degradation; L-rhamnose degradation; glycerone phosphate from L-rhamnose: step 3/3. Catalyzes the reversible cleavage of L-rhamnulose-1-phosphate to dihydroxyacetone phosphate (DHAP) and L-lactaldehyde. This chain is Rhamnulose-1-phosphate aldolase, found in Salmonella paratyphi C (strain RKS4594).